We begin with the raw amino-acid sequence, 176 residues long: MFNFIDNVQTYSKEALQAAKYIGQGFMVTFDHMNRRAITIQYPYEKLIPSERFRGRIHFEFDKCIACEVCVRVCPINLPVVNWEFQKEKKKKQLQTYSIDFGVCIFCGNCVEYCPTNCLSMTEEYELSVYDRHELNYDNFALGRLPTMVNNDSMVKGIKGLGYLPKGIIEGHIDNQ.

4Fe-4S ferredoxin-type domains lie at 55–84 and 95–124; these read GRIHFEFDKCIACEVCVRVCPINLPVVNWE and QTYSIDFGVCIFCGNCVEYCPTNCLSMTEE. [4Fe-4S] cluster-binding residues include Cys-64, Cys-67, Cys-70, Cys-74, Cys-104, Cys-107, Cys-110, and Cys-114.

Belongs to the complex I 23 kDa subunit family. As to quaternary structure, NDH is composed of at least 16 different subunits, 5 of which are encoded in the nucleus. [4Fe-4S] cluster is required as a cofactor.

The protein localises to the plastid. It is found in the chloroplast thylakoid membrane. The catalysed reaction is a plastoquinone + NADH + (n+1) H(+)(in) = a plastoquinol + NAD(+) + n H(+)(out). The enzyme catalyses a plastoquinone + NADPH + (n+1) H(+)(in) = a plastoquinol + NADP(+) + n H(+)(out). Its function is as follows. NDH shuttles electrons from NAD(P)H:plastoquinone, via FMN and iron-sulfur (Fe-S) centers, to quinones in the photosynthetic chain and possibly in a chloroplast respiratory chain. The immediate electron acceptor for the enzyme in this species is believed to be plastoquinone. Couples the redox reaction to proton translocation, and thus conserves the redox energy in a proton gradient. In Mesostigma viride (Green alga), this protein is NAD(P)H-quinone oxidoreductase subunit I, chloroplastic.